The following is a 1257-amino-acid chain: Period circadian protein homolog 2 (1257 aa).

The segment at 1 to 60 (MNGYVDFSPSPTSPTKEPGAPQPTQAVLQEDVDMSSGSSGNENCSTGRDSQGSDCDDNGK) is disordered. Residues 35–53 (SSGSSGNENCSTGRDSQGS) show a composition bias toward polar residues. The Nuclear export signal 1 motif lies at 109 to 118 (LIRTLKELKV). Positions 179–246 (ITSEYIVKNA…FHSYTTPYKL (68 aa)) constitute a PAS 1 domain. The LXXLL signature appears at 306 to 310 (LCCLL). A PAS 2 domain is found at 319-385 (YEAPRIPPEK…MLAIHKKILQ (67 aa)). One can recognise a PAC domain in the interval 393–436 (YSPIRFRTRNGEYITLDTSWSSFINPWSRKISFIIGRHKVRVGP). A Nuclear export signal 2 motif is present at residues 460–469 (LTEQIHRLLM). 2 disordered regions span residues 471–565 (PVPH…GASL) and 617–638 (PSRK…PSKV). An important for protein stability region spans residues 478–482 (SGYGS). A compositionally biased stretch (polar residues) spans 493-504 (MSQTSSSDSNGQ). The tract at residues 510–709 (RRSGIFKTSG…GAAGGLSQEK (200 aa)) is CSNK1E binding domain. 5 positions are modified to phosphoserine: Ser525, Ser528, Ser531, Ser538, and Ser544. A Phosphothreonine modification is found at Thr554. Phosphoserine occurs at positions 659, 693, 697, 706, 758, and 763. A disordered region spans residues 757-832 (RSRAQASDRG…SDTSQSSCPS (76 aa)). Positions 778 to 794 (KKTGKNRKLKSKRVKTR) match the Nuclear localization signal motif. Positions 779–792 (KTGKNRKLKSKRVK) are enriched in basic residues. Over residues 821–832 (SPSDTSQSSCPS) the composition is skewed to low complexity. Thr858 is modified (phosphothreonine). An interaction with PPARG region spans residues 882 to 1067 (EFAVQPLPFA…DLCSATGSAL (186 aa)). Phosphoserine is present on Ser939. Residue Thr964 is modified to Phosphothreonine. Ser971 is subject to Phosphoserine. Residues 983–990 (LQLNLLQL) carry the Nuclear export signal 3 motif. The segment at 994-1044 (PEGSTGAAGTLGTTGTAASGLDCTSGTSRDRQPKAPPTCNEPSDTQNSDAI) is disordered. A compositionally biased stretch (low complexity) spans 996–1014 (GSTGAAGTLGTTGTAASGL). Over residues 1033-1044 (NEPSDTQNSDAI) the composition is skewed to polar residues. The short motif at 1051–1055 (LNLLL) is the LXXLL element. Residues 1070–1092 (SGASATSDSLGSSSLGFGTSQSG) show a composition bias toward low complexity. The tract at residues 1070-1115 (SGASATSDSLGSSSLGFGTSQSGAGSSDTSHTSKYFGSIDSSENNH) is disordered. Positions 1093–1111 (AGSSDTSHTSKYFGSIDSS) are enriched in polar residues. Ser1126 carries the post-translational modification Phosphoserine. The interval 1157–1257 (SRDLQAVLKE…LTGPRIEAQT (101 aa)) is CRY binding domain. A disordered region spans residues 1224–1257 (PYEEDSPSPGLCDTSEAKEEEGEQLTGPRIEAQT).

Homodimer. Component of the circadian core oscillator, which includes the CRY proteins, CLOCK or NPAS2, BMAL1 or BMAL2, CSNK1D and/or CSNK1E, TIMELESS, and the PER proteins. Interacts with CLOCK-BMAL1 (off DNA). Interacts with BMAL2. Interacts directly with PER1 and PER3, and through a C-terminal domain, with CRY1 and CRY2. Interacts (via PAS 2 domain) with TIMELESS. Interacts with NFIL3. Different large complexes have been identified with different repressive functions. The core of PER complexes is composed of at least PER1, PER2, PER3, CRY1, CRY2, CSNK1D and/or CSNK1E. The large PER complex involved in the repression of transcriptional termination is composed of at least PER2, CDK9, DDX5, DHX9, NCBP1 and POLR2A (active). The large PER complex involved in the histone deacetylation is composed of at least HDAC1, PER2, SFPQ and SIN3A. The large PER complex involved in the histone methylation is composed of at least PER2, CBX3, TRIM28, SUV39H1 and/or SUV39H2; CBX3 mediates the formation of the complex. Interacts with SETX; the interaction inhibits termination of circadian target genes. Interacts with the nuclear receptors HNF4A, NR1D1, NR4A2, RORA, PPARA, PPARG and THRA; the interaction with at least PPARG is ligand dependent. Interacts with PML. Interacts (phosphorylated) with BTRC and FBXW11; the interactions trigger proteasomal degradation. Interacts with NONO and SFPQ. Interacts with CAVIN3. Interacts with MAGEL2. Interacts with MAP1LC3B. Interacts with HNF4A. Post-translationally, acetylated. Deacetylated by SIRT1, resulting in decreased protein stability. Deacetylated by SIRT6, preventing its degradation by the proteasome, resulting in increased protein stability. Phosphorylated by CSNK1E and CSNK1D. Phosphorylation results in PER2 protein degradation. May be dephosphorylated by PP1. In terms of processing, ubiquitinated, leading to its proteasomal degradation. Ubiquitination may be inhibited by CRY1. In the brain, high expression in SCN during the subjective day. Constitutive expression in the cornu ammonis and in the dentate gyrus of the hippocampus. Also expressed in the piriform cortex and the glomeruli of the olfactory bulb, and at a lower extent in the cerebral cortex. Not expressed in the pars tuberalis and the Purkinje neurons. Also expressed in adipose tissue (white and brown), heart, kidney, bladder, lumbar spinal cord, skeletal muscle, spleen, lung, pancreas and liver with highest levels in skeletal muscle and liver and lowest levels in spleen.

The protein localises to the nucleus. The protein resides in the cytoplasm. It localises to the perinuclear region. Transcriptional repressor which forms a core component of the circadian clock. The circadian clock, an internal time-keeping system, regulates various physiological processes through the generation of approximately 24 hour circadian rhythms in gene expression, which are translated into rhythms in metabolism and behavior. It is derived from the Latin roots 'circa' (about) and 'diem' (day) and acts as an important regulator of a wide array of physiological functions including metabolism, sleep, body temperature, blood pressure, endocrine, immune, cardiovascular, and renal function. Consists of two major components: the central clock, residing in the suprachiasmatic nucleus (SCN) of the brain, and the peripheral clocks that are present in nearly every tissue and organ system. Both the central and peripheral clocks can be reset by environmental cues, also known as Zeitgebers (German for 'timegivers'). The predominant Zeitgeber for the central clock is light, which is sensed by retina and signals directly to the SCN. The central clock entrains the peripheral clocks through neuronal and hormonal signals, body temperature and feeding-related cues, aligning all clocks with the external light/dark cycle. Circadian rhythms allow an organism to achieve temporal homeostasis with its environment at the molecular level by regulating gene expression to create a peak of protein expression once every 24 hours to control when a particular physiological process is most active with respect to the solar day. Transcription and translation of core clock components (CLOCK, NPAS2, BMAL1, BMAL2, PER1, PER2, PER3, CRY1 and CRY2) plays a critical role in rhythm generation, whereas delays imposed by post-translational modifications (PTMs) are important for determining the period (tau) of the rhythms (tau refers to the period of a rhythm and is the length, in time, of one complete cycle). A diurnal rhythm is synchronized with the day/night cycle, while the ultradian and infradian rhythms have a period shorter and longer than 24 hours, respectively. Disruptions in the circadian rhythms contribute to the pathology of cardiovascular diseases, cancer, metabolic syndrome and aging. A transcription/translation feedback loop (TTFL) forms the core of the molecular circadian clock mechanism. Transcription factors, CLOCK or NPAS2 and BMAL1 or BMAL2, form the positive limb of the feedback loop, act in the form of a heterodimer and activate the transcription of core clock genes and clock-controlled genes (involved in key metabolic processes), harboring E-box elements (5'-CACGTG-3') within their promoters. The core clock genes: PER1/2/3 and CRY1/2 which are transcriptional repressors form the negative limb of the feedback loop and interact with the CLOCK|NPAS2-BMAL1|BMAL2 heterodimer inhibiting its activity and thereby negatively regulating their own expression. This heterodimer also activates nuclear receptors NR1D1/2 and RORA/B/G, which form a second feedback loop and which activate and repress BMAL1 transcription, respectively. PER1 and PER2 proteins transport CRY1 and CRY2 into the nucleus with appropriate circadian timing, but also contribute directly to repression of clock-controlled target genes through interaction with several classes of RNA-binding proteins, helicases and others transcriptional repressors. PER appears to regulate circadian control of transcription by at least three different modes. First, interacts directly with the CLOCK-BMAL1 at the tail end of the nascent transcript peak to recruit complexes containing the SIN3-HDAC that remodel chromatin to repress transcription. Second, brings H3K9 methyltransferases such as SUV39H1 and SUV39H2 to the E-box elements of the circadian target genes, like PER2 itself or PER1. The recruitment of each repressive modifier to the DNA seems to be very precisely temporally orchestrated by the large PER complex, the deacetylases acting before than the methyltransferases. Additionally, large PER complexes are also recruited to the target genes 3' termination site through interactions with RNA-binding proteins and helicases that may play a role in transcription termination to regulate transcription independently of CLOCK-BMAL1 interactions. Recruitment of large PER complexes to the elongating polymerase at PER and CRY termination sites inhibited SETX action, impeding RNA polymerase II release and thereby repressing transcriptional reinitiation. May propagate clock information to metabolic pathways via the interaction with nuclear receptors. Coactivator of PPARA and corepressor of NR1D1, binds rhythmically at the promoter of nuclear receptors target genes like BMAL1 or G6PC1. Directly and specifically represses PPARG proadipogenic activity by blocking PPARG recruitment to target promoters and thereby transcriptional activation. Required for fatty acid and lipid metabolism, is involved as well in the regulation of circulating insulin levels. Plays an important role in the maintenance of cardiovascular functions through the regulation of NO and vasodilatatory prostaglandins production in aortas. Controls circadian glutamate uptake in synaptic vesicles through the regulation of VGLUT1 expression. May also be involved in the regulation of inflammatory processes. Represses the CLOCK-BMAL1 induced transcription of BHLHE40/DEC1 and ATF4. Negatively regulates the formation of the TIMELESS-CRY1 complex by competing with TIMELESS for binding to CRY1. The polypeptide is Period circadian protein homolog 2 (Per2) (Mus musculus (Mouse)).